Reading from the N-terminus, the 94-residue chain is Small ribosomal subunit protein bS6 (94 aa).

Belongs to the bacterial ribosomal protein bS6 family.

Binds together with bS18 to 16S ribosomal RNA. This is Small ribosomal subunit protein bS6 from Desulforudis audaxviator (strain MP104C).